A 65-amino-acid polypeptide reads, in one-letter code: NADH dehydrogenase [ubiquinone] 1 alpha subcomplex subunit 1 (65 aa).

Residues 3-23 (LVWLEAMLPLGIIGGMLCIMG) traverse the membrane as a helical segment.

The protein belongs to the complex I NDUFA1 subunit family. As to quaternary structure, complex I is composed of at least 49 different subunits.

The protein localises to the mitochondrion inner membrane. In terms of biological role, accessory subunit of the mitochondrial membrane respiratory chain NADH dehydrogenase (Complex I), that is believed not to be involved in catalysis. Complex I functions in the transfer of electrons from NADH to the respiratory chain. The immediate electron acceptor for the enzyme is believed to be ubiquinone. The protein is NADH dehydrogenase [ubiquinone] 1 alpha subcomplex subunit 1 of Arabidopsis thaliana (Mouse-ear cress).